A 148-amino-acid chain; its full sequence is SsrA-binding protein (148 aa).

It belongs to the SmpB family.

It localises to the cytoplasm. In terms of biological role, required for rescue of stalled ribosomes mediated by trans-translation. Binds to transfer-messenger RNA (tmRNA), required for stable association of tmRNA with ribosomes. tmRNA and SmpB together mimic tRNA shape, replacing the anticodon stem-loop with SmpB. tmRNA is encoded by the ssrA gene; the 2 termini fold to resemble tRNA(Ala) and it encodes a 'tag peptide', a short internal open reading frame. During trans-translation Ala-aminoacylated tmRNA acts like a tRNA, entering the A-site of stalled ribosomes, displacing the stalled mRNA. The ribosome then switches to translate the ORF on the tmRNA; the nascent peptide is terminated with the 'tag peptide' encoded by the tmRNA and targeted for degradation. The ribosome is freed to recommence translation, which seems to be the essential function of trans-translation. This Ehrlichia ruminantium (strain Welgevonden) protein is SsrA-binding protein.